The chain runs to 245 residues: Type III pantothenate kinase (245 aa).

6–13 contributes to the ATP binding site; that stretch reads DVGNTAMK. Substrate-binding positions include Y93 and 100–103; that span reads GVDR. D102 serves as the catalytic Proton acceptor. D121 serves as a coordination point for K(+). S124 contacts ATP. Residue T175 participates in substrate binding.

Belongs to the type III pantothenate kinase family. In terms of assembly, homodimer. It depends on NH4(+) as a cofactor. The cofactor is K(+).

Its subcellular location is the cytoplasm. The enzyme catalyses (R)-pantothenate + ATP = (R)-4'-phosphopantothenate + ADP + H(+). It participates in cofactor biosynthesis; coenzyme A biosynthesis; CoA from (R)-pantothenate: step 1/5. In terms of biological role, catalyzes the phosphorylation of pantothenate (Pan), the first step in CoA biosynthesis. This is Type III pantothenate kinase from Alcanivorax borkumensis (strain ATCC 700651 / DSM 11573 / NCIMB 13689 / SK2).